Consider the following 228-residue polypeptide: Claudin-10 (228 aa).

The helical transmembrane segment at 1 to 21 threads the bilayer; the sequence is MASTASEIIAFMVSISGWVLV. The Extracellular segment spans residues 22 to 80; it reads SSTLPTDYWKVSTIDGTVITTATYWANLWKACVTDSTGVSNCKDFPSMLALDGYIQACR. The chain crosses the membrane as a helical span at residues 81–101; the sequence is GLMIAAVSLGFFGSIFALFGM. The Cytoplasmic segment spans residues 102–115; the sequence is KCTKVGGSDKAKAK. A helical membrane pass occupies residues 116 to 136; sequence IACLAGIVFILSGLCSMTGCS. The Extracellular segment spans residues 137 to 160; sequence LYANKITTEFFDPLFVEQKYELGA. A helical transmembrane segment spans residues 161-181; it reads ALFIGWAGASLCIIGGVIFCF. At 182 to 228 the chain is on the cytoplasmic side; that stretch reads SISDNNKTPRYTYNGATSVMSSRTKYHGGEDFKTTNPSKQFDKNAYV.

It belongs to the claudin family. Can form homodimers both in trans (interaction between CLDN10 molecules in opposing membranes) and in cis (interaction between CLDN10 molecules within one membrane). As to quaternary structure, interacts with CLDN19. In terms of tissue distribution, expressed in the kidney, eccrine sweat glands and in all layers of the epidermis. In the kidney, it is detected in the thick ascending limb of Henle's loop (TAL). In the sweat glands, it is expressed in cells from secretory portions, corresponding to the clear cells.

The protein resides in the cell junction. It localises to the tight junction. Its subcellular location is the cell membrane. The enzyme catalyses Na(+)(in) = Na(+)(out). It catalyses the reaction Li(+)(in) = Li(+)(out). It carries out the reaction K(+)(in) = K(+)(out). The catalysed reaction is Rb(+)(in) = Rb(+)(out). The enzyme catalyses Cs(+)(in) = Cs(+)(out). It catalyses the reaction NH4(+)(in) = NH4(+)(out). It carries out the reaction methylamine(out) = methylamine(in). The catalysed reaction is Mg(2+)(in) = Mg(2+)(out). The enzyme catalyses Ca(2+)(in) = Ca(2+)(out). It catalyses the reaction Sr(2+)(in) = Sr(2+)(out). It carries out the reaction chloride(in) = chloride(out). The catalysed reaction is nitrate(in) = nitrate(out). In terms of biological role, forms paracellular channels: polymerizes in tight junction strands with cation- and anion-selective channels through the strands, conveying epithelial permeability in a process known as paracellular tight junction permeability. Forms cation-selective paracellular channels. In sweat glands and in the thick ascending limb (TAL) of Henle's loop in kidney, it controls paracellular sodium permeability which is essential for proper sweat production and renal function. Functionally, forms anion-selective paracellular channels. In renal proximal tubules, it conveys selective chloride over hydrogencarbonate anion permeability which is required for renal chloride reabsorption and salt homeostasis. This is Claudin-10 from Homo sapiens (Human).